The sequence spans 456 residues: tRNA modification GTPase MnmE (456 aa).

Residues Arg24, Glu81, and Lys120 each contribute to the (6S)-5-formyl-5,6,7,8-tetrahydrofolate site. The TrmE-type G domain occupies 216 to 379 (GMTVVIAGRP…LREHLKACMG (164 aa)). Asn226 serves as a coordination point for K(+). Residues 226-231 (NAGKSS), 245-251 (TEIAGTT), 270-273 (DTAG), 335-338 (NKAD), and 359-361 (SAR) each bind GTP. Ser230 lines the Mg(2+) pocket. Residues Thr245, Ile247, and Thr250 each coordinate K(+). Thr251 is a Mg(2+) binding site. Lys456 contributes to the (6S)-5-formyl-5,6,7,8-tetrahydrofolate binding site.

It belongs to the TRAFAC class TrmE-Era-EngA-EngB-Septin-like GTPase superfamily. TrmE GTPase family. In terms of assembly, homodimer. Heterotetramer of two MnmE and two MnmG subunits. K(+) is required as a cofactor.

The protein localises to the cytoplasm. Functionally, exhibits a very high intrinsic GTPase hydrolysis rate. Involved in the addition of a carboxymethylaminomethyl (cmnm) group at the wobble position (U34) of certain tRNAs, forming tRNA-cmnm(5)s(2)U34. This is tRNA modification GTPase MnmE from Pseudomonas syringae pv. syringae (strain B728a).